A 399-amino-acid chain; its full sequence is Succinate--CoA ligase [ADP-forming] subunit beta (399 aa).

The ATP-grasp domain occupies 9-254; sequence KAVLAEFGAP…ESEEDPKEIE (246 aa). Residues Lys-46, 53–55, Glu-109, Ala-112, and Glu-117 each bind ATP; that span reads GRG. Positions 209 and 223 each coordinate Mg(2+). Residues Asn-274 and 331–333 contribute to the substrate site; that span reads GIM.

Belongs to the succinate/malate CoA ligase beta subunit family. Heterotetramer of two alpha and two beta subunits. Requires Mg(2+) as cofactor.

The enzyme catalyses succinate + ATP + CoA = succinyl-CoA + ADP + phosphate. The catalysed reaction is GTP + succinate + CoA = succinyl-CoA + GDP + phosphate. The protein operates within carbohydrate metabolism; tricarboxylic acid cycle; succinate from succinyl-CoA (ligase route): step 1/1. In terms of biological role, succinyl-CoA synthetase functions in the citric acid cycle (TCA), coupling the hydrolysis of succinyl-CoA to the synthesis of either ATP or GTP and thus represents the only step of substrate-level phosphorylation in the TCA. The beta subunit provides nucleotide specificity of the enzyme and binds the substrate succinate, while the binding sites for coenzyme A and phosphate are found in the alpha subunit. The sequence is that of Succinate--CoA ligase [ADP-forming] subunit beta from Caulobacter vibrioides (strain NA1000 / CB15N) (Caulobacter crescentus).